The primary structure comprises 284 residues: 3-methyl-2-oxobutanoate hydroxymethyltransferase (284 aa).

Mg(2+) contacts are provided by Asp44 and Asp83. Residues 44-45, Asp83, and Lys112 each bind 3-methyl-2-oxobutanoate; that span reads DS. Glu114 is a Mg(2+) binding site. Residue Glu181 is the Proton acceptor of the active site.

The protein belongs to the PanB family. Homodecamer; pentamer of dimers. Requires Mg(2+) as cofactor.

The protein localises to the cytoplasm. It catalyses the reaction 3-methyl-2-oxobutanoate + (6R)-5,10-methylene-5,6,7,8-tetrahydrofolate + H2O = 2-dehydropantoate + (6S)-5,6,7,8-tetrahydrofolate. It functions in the pathway cofactor biosynthesis; coenzyme A biosynthesis. Its activity is regulated as follows. Neither activated nor inhibited by coenzyme A. In terms of biological role, catalyzes the reversible reaction in which hydroxymethyl group from 5,10-methylenetetrahydrofolate is transferred onto alpha-ketoisovalerate to form ketopantoate. This is 3-methyl-2-oxobutanoate hydroxymethyltransferase from Thermococcus kodakarensis (strain ATCC BAA-918 / JCM 12380 / KOD1) (Pyrococcus kodakaraensis (strain KOD1)).